Here is a 70-residue protein sequence, read N- to C-terminus: Small, acid-soluble spore protein alpha (70 aa).

This sequence belongs to the alpha/beta-type SASP family.

Its function is as follows. SASP are bound to spore DNA. They are double-stranded DNA-binding proteins that cause DNA to change to an a-like conformation. They protect the DNA backbone from chemical and enzymatic cleavage and are thus involved in dormant spore's high resistance to UV light. In Paraclostridium bifermentans (Clostridium bifermentans), this protein is Small, acid-soluble spore protein alpha.